A 473-amino-acid chain; its full sequence is ATP synthase subunit beta (473 aa).

158-165 (GGAGVGKT) contacts ATP.

The protein belongs to the ATPase alpha/beta chains family. As to quaternary structure, F-type ATPases have 2 components, CF(1) - the catalytic core - and CF(0) - the membrane proton channel. CF(1) has five subunits: alpha(3), beta(3), gamma(1), delta(1), epsilon(1). CF(0) has three main subunits: a(1), b(2) and c(9-12). The alpha and beta chains form an alternating ring which encloses part of the gamma chain. CF(1) is attached to CF(0) by a central stalk formed by the gamma and epsilon chains, while a peripheral stalk is formed by the delta and b chains.

Its subcellular location is the cell membrane. The catalysed reaction is ATP + H2O + 4 H(+)(in) = ADP + phosphate + 5 H(+)(out). Functionally, produces ATP from ADP in the presence of a proton gradient across the membrane. The catalytic sites are hosted primarily by the beta subunits. The protein is ATP synthase subunit beta of Bacillus licheniformis (strain ATCC 14580 / DSM 13 / JCM 2505 / CCUG 7422 / NBRC 12200 / NCIMB 9375 / NCTC 10341 / NRRL NRS-1264 / Gibson 46).